A 408-amino-acid chain; its full sequence is Protein ZNF365 (408 aa).

Residue Ser16 is modified to Phosphoserine. The C2H2-type; degenerate zinc finger occupies 26–51; sequence FRCPRCGDHTRFRSLSSLRAHLEFSH. 2 positions are modified to phosphoserine: Ser139 and Ser146. Residues 170 to 298 adopt a coiled-coil conformation; it reads VEAVDRTIEK…QLEYYQSQQA (129 aa). Thr176 carries the phosphothreonine modification. Ser370 carries the phosphoserine modification.

As to quaternary structure, homodimer. Interacts with NDE1 and NDEL1. Interacts with DISC1. Interacts with PARP1. Interacts with MCRS1. Detected in several tissues, with highest levels in brain. Also expressed during embryonic development. Expressed in cerebral cortex, hippocampus, striatum, inferior colliculus and thalamus.

The protein resides in the cytoplasm. The protein localises to the cytoskeleton. It is found in the microtubule organizing center. Its subcellular location is the centrosome. In terms of biological role, contributes to genomic stability by preventing telomere dysfunction. Involved in the morphogenesis of basket cells in the somatosensory cortex during embryogenesis. Involved in the positive regulation of oligodendrocyte differentiation during postnatal growth. Involved in dendritic arborization, morphogenesis of spine density dendrite, and establishment of postsynaptic dendrite density in cortical pyramidal neurons. Involved in the regulation of neurogenesis. Negatively regulates neurite outgrowth. Involved in homologous recombination (HR) repair pathway. Required for proper resolution of DNA double-strand breaks (DSBs) by HR. Is required for recovery of stalled replication forks, and directly contributes to genomic stability. Interacts with PARP1 and mediates MRE11-dependent DNA end resection during replication fork recovery. This chain is Protein ZNF365 (Znf365), found in Mus musculus (Mouse).